A 210-amino-acid chain; its full sequence is Cell division protein SepF (210 aa).

It belongs to the SepF family. In terms of assembly, homodimer. Interacts with FtsZ.

Its subcellular location is the cytoplasm. In terms of biological role, cell division protein that is part of the divisome complex and is recruited early to the Z-ring. Probably stimulates Z-ring formation, perhaps through the cross-linking of FtsZ protofilaments. Its function overlaps with FtsA. The protein is Cell division protein SepF of Mycobacterium leprae (strain Br4923).